The sequence spans 430 residues: MTTIAKILAREILDSRGNPTLEAEVTLDDGSFGRAAVPSGASTGTKEAVELRDGDKTRYLGKGVRHAVDNVNGTIAETLKNFDAADQQGLDRRLIDLDGTENKGRLGANALLGVSLAAAHAVAASRKQPLWQYLSTITEADVALPVPMMNIINGGAHADNNVDFQEFMVLPVGCSSFSEALRAGTEIFHSLKSVLKGHGLSTAVGDEGGFAPDFRSNVEALDTILEAIGKAGYTAGEDILLGLDVASSEFYDNGKYNLVGENKRLTSEQFVDFLADWVAQYPIISIEDGLAEDDWAGWKLLTDRVGKKVQLVGDDLFVTNPKIFKQGIDSGTANAILIKVNQIGTLTETLEAIAMAHAANYASIVSHRSGETEDTTIADIAVATTATQIKTGSLCRSDRVAKYNQLLRIEQALGSGARYAGRDAFVSIKR.

Residue Gln165 participates in (2R)-2-phosphoglycerate binding. The active-site Proton donor is Glu207. Residues Asp244, Glu287, and Asp314 each coordinate Mg(2+). (2R)-2-phosphoglycerate-binding residues include Lys339, Arg368, Ser369, and Lys390. Lys339 serves as the catalytic Proton acceptor.

It belongs to the enolase family. In terms of assembly, component of the RNA degradosome, a multiprotein complex involved in RNA processing and mRNA degradation. The cofactor is Mg(2+).

Its subcellular location is the cytoplasm. The protein localises to the secreted. It localises to the cell surface. The enzyme catalyses (2R)-2-phosphoglycerate = phosphoenolpyruvate + H2O. The protein operates within carbohydrate degradation; glycolysis; pyruvate from D-glyceraldehyde 3-phosphate: step 4/5. Functionally, catalyzes the reversible conversion of 2-phosphoglycerate (2-PG) into phosphoenolpyruvate (PEP). It is essential for the degradation of carbohydrates via glycolysis. This Xanthomonas axonopodis pv. citri (strain 306) protein is Enolase.